We begin with the raw amino-acid sequence, 380 residues long: Outer membrane protein 40 (380 aa).

Positions 1–21 are cleaved as a signal peptide; it reads MKAKSLLLALAGLACTFSATA. At Q22 the chain carries Pyrrolidone carboxylic acid. The OmpA-like domain occupies 270–380; the sequence is PTVTRVVVDN…NRIVVMTAAE (111 aa).

Belongs to the outer membrane OOP (TC 1.B.6) superfamily. In terms of assembly, disulfide-linked heterodimer with Omp41.

It localises to the cell outer membrane. In terms of biological role, may have porin activity and function in peptidoglycan binding. This Porphyromonas gingivalis (strain ATCC BAA-308 / W83) protein is Outer membrane protein 40.